Consider the following 356-residue polypeptide: UDP-N-acetylglucosamine--N-acetylmuramyl-(pentapeptide) pyrophosphoryl-undecaprenol N-acetylglucosamine transferase (356 aa).

UDP-N-acetyl-alpha-D-glucosamine-binding positions include 15–17 (TGG), N127, R163, S191, I244, 263–268 (ALTVSE), and Q288.

Belongs to the glycosyltransferase 28 family. MurG subfamily.

It is found in the cell inner membrane. The enzyme catalyses di-trans,octa-cis-undecaprenyl diphospho-N-acetyl-alpha-D-muramoyl-L-alanyl-D-glutamyl-meso-2,6-diaminopimeloyl-D-alanyl-D-alanine + UDP-N-acetyl-alpha-D-glucosamine = di-trans,octa-cis-undecaprenyl diphospho-[N-acetyl-alpha-D-glucosaminyl-(1-&gt;4)]-N-acetyl-alpha-D-muramoyl-L-alanyl-D-glutamyl-meso-2,6-diaminopimeloyl-D-alanyl-D-alanine + UDP + H(+). It participates in cell wall biogenesis; peptidoglycan biosynthesis. In terms of biological role, cell wall formation. Catalyzes the transfer of a GlcNAc subunit on undecaprenyl-pyrophosphoryl-MurNAc-pentapeptide (lipid intermediate I) to form undecaprenyl-pyrophosphoryl-MurNAc-(pentapeptide)GlcNAc (lipid intermediate II). The protein is UDP-N-acetylglucosamine--N-acetylmuramyl-(pentapeptide) pyrophosphoryl-undecaprenol N-acetylglucosamine transferase of Yersinia pseudotuberculosis serotype O:1b (strain IP 31758).